We begin with the raw amino-acid sequence, 307 residues long: Upstream stimulatory factor 1 (307 aa).

2 disordered regions span residues 104–131 (DDNG…SVGG) and 168–207 (QGGS…VERR). The span at 122-131 (PTDSSTSVGG) shows a compositional bias: low complexity. Positions 187–207 (DGPRTTRDDKRRAQHNEVERR) are enriched in basic and acidic residues. In terms of domain architecture, bHLH spans 196–251 (KRRAQHNEVERRRRDKINNWIVQLSKIIPDCSMESTKTGQSKGGILSKACDYIQEL). The leucine-zipper stretch occupies residues 268-289 (LQMDNEVLRQQVEDLKNNNLTL).

As to quaternary structure, efficient DNA binding requires dimerization with another bHLH protein. Binds DNA as a homodimer or a heterodimer. Oocyte and somatic tissue. Oocytic and somatic forms of this protein exist, probably as a result of post-translational modifications or minor splicing differences.

The protein resides in the nucleus. In terms of biological role, may act as a regulator of transcription factor IIIA (TFIIIA) gene expression. This is Upstream stimulatory factor 1 (usf1) from Xenopus borealis (Kenyan clawed frog).